We begin with the raw amino-acid sequence, 319 residues long: Tyrosine--tRNA ligase (319 aa).

Y35 contributes to the L-tyrosine binding site. Positions 40–48 (PSGKIHLGH) match the 'HIGH' region motif. Residues Y156, Q160, D163, and Q178 each contribute to the L-tyrosine site. The 'KMSKS' region signature appears at 213–217 (KMSSS). S216 provides a ligand contact to ATP.

This sequence belongs to the class-I aminoacyl-tRNA synthetase family. TyrS type 3 subfamily. As to quaternary structure, homodimer.

It localises to the cytoplasm. The enzyme catalyses tRNA(Tyr) + L-tyrosine + ATP = L-tyrosyl-tRNA(Tyr) + AMP + diphosphate + H(+). Catalyzes the attachment of tyrosine to tRNA(Tyr) in a two-step reaction: tyrosine is first activated by ATP to form Tyr-AMP and then transferred to the acceptor end of tRNA(Tyr). This Methanobrevibacter smithii (strain ATCC 35061 / DSM 861 / OCM 144 / PS) protein is Tyrosine--tRNA ligase.